The following is a 1086-amino-acid chain: Receptor-type guanylate cyclase gcy-6 (1086 aa).

The first 21 residues, 1–21 (MIGVYLRSVIFPLLFVIQTIC), serve as a signal peptide directing secretion. Residues 22–487 (QPPGNVFHLG…PANVFFQYIG (466 aa)) lie on the Extracellular side of the membrane. 4 N-linked (GlcNAc...) asparagine glycosylation sites follow: Asn325, Asn343, Asn387, and Asn427. Residues 488-508 (WFIAAIIIIFFTIMGAILAFI) form a helical membrane-spanning segment. At 509–1086 (YLCHAKQQEV…APKILKKKQD (578 aa)) the chain is on the cytoplasmic side. One can recognise a Protein kinase domain in the interval 560-836 (SSTLSEVGET…NDNLMDHVFN (277 aa)). ATP is bound by residues 566 to 574 (VGETRNYLF) and Lys589. Positions 894–1024 (TLFFSDVVSF…DAVNTASRME (131 aa)) constitute a Guanylate cyclase domain.

This sequence belongs to the adenylyl cyclase class-4/guanylyl cyclase family. As to expression, expressed in both ASEL and ASER neurons throughout late embryonic and early larval stages. In adults, expressed asymmetrically in ASE left (ASEL) sensory neuron.

Its subcellular location is the cell membrane. The catalysed reaction is GTP = 3',5'-cyclic GMP + diphosphate. Functionally, guanylate cyclase involved in the production of the second messenger cGMP. Regulates chemotaxis responses toward the salt ion Mg(2+) and to a lesser extent toward Cl(1-) in ASE left (ASEL) sensory neuron. This is Receptor-type guanylate cyclase gcy-6 from Caenorhabditis elegans.